We begin with the raw amino-acid sequence, 528 residues long: Keratin, type II cytoskeletal 78 (528 aa).

The head stretch occupies residues 1–104; that stretch reads MSLSPCRARR…DPQFQVVRTQ (104 aa). Residues 23–45 form a disordered region; the sequence is VGRGRTGFSSRSLSSFGGCRGGS. The segment covering 24–39 has biased composition (low complexity); the sequence is GRGRTGFSSRSLSSFG. Positions 105 to 140 are coil 1A; that stretch reads ETQQIRVLNNQFASFIDKVRFLEQQNKVLETKWHLL. One can recognise an IF rod domain in the interval 105–418; the sequence is ETQQIRVLNN…RLLEGEECRM (314 aa). The linker 1 stretch occupies residues 141–159; the sequence is QQQGLSDRPQGLESFFEAY. A coil 1B region spans residues 160–252; the sequence is LVRLRTQLEE…LYEEELGQLQ (93 aa). Residues 253-275 form a linker 12 region; the sequence is TQASDMSVVLSMDNNRCLDFRDL. The interval 276 to 415 is coil 2; that stretch reads IAEVRARYEE…TYRRLLEGEE (140 aa). A tail region spans residues 416-528; the sequence is CRMSGECASQ…ESSLKTSVTY (113 aa).

Belongs to the intermediate filament family. Heterotetramer of two type I and two type II keratins.

This is Keratin, type II cytoskeletal 78 (KRT78) from Bos taurus (Bovine).